We begin with the raw amino-acid sequence, 154 residues long: Nucleoside diphosphate kinase A2 (154 aa).

Residues Lys-13, Phe-61, Arg-89, Thr-95, Arg-106, and Asn-116 each coordinate ATP. His-119 acts as the Pros-phosphohistidine intermediate in catalysis.

This sequence belongs to the NDK family. Mg(2+) serves as cofactor.

It localises to the cytoplasm. It catalyses the reaction a 2'-deoxyribonucleoside 5'-diphosphate + ATP = a 2'-deoxyribonucleoside 5'-triphosphate + ADP. The catalysed reaction is a ribonucleoside 5'-diphosphate + ATP = a ribonucleoside 5'-triphosphate + ADP. Functionally, major role in the synthesis of nucleoside triphosphates other than ATP. The ATP gamma phosphate is transferred to the NDP beta phosphate via a ping-pong mechanism, using a phosphorylated active-site intermediate. This is Nucleoside diphosphate kinase A2 from Xenopus laevis (African clawed frog).